Here is a 197-residue protein sequence, read N- to C-terminus: Tic20 family protein Ycf60 (197 aa).

Transmembrane regions (helical) follow at residues 3 to 23 (IIIA…GVGV), 47 to 66 (FGYY…PDVL), 81 to 101 (LVVV…MSYF), 118 to 138 (VSQA…LNAL), and 141 to 161 (MILM…LTMG).

Belongs to the Tic20 family.

It localises to the plastid. It is found in the chloroplast membrane. This chain is Tic20 family protein Ycf60 (ycf60), found in Cyanidioschyzon merolae (strain NIES-3377 / 10D) (Unicellular red alga).